The chain runs to 232 residues: (S)-2-haloacid dehalogenase (232 aa).

Catalysis depends on Asp10, which acts as the Nucleophile. An (S)-2-haloacid is bound by residues 11–12 (LY), Arg41, and 118–119 (SN). The tract at residues 175 to 180 (SSNAWD) is important for catalytic activity.

The protein belongs to the HAD-like hydrolase superfamily. S-2-haloalkanoic acid dehalogenase family. Homodimer.

The catalysed reaction is an (S)-2-haloacid + H2O = a (2R)-2-hydroxycarboxylate + a halide anion + H(+). It catalyses the reaction (S)-2-chloropropanoate + H2O = (R)-lactate + chloride + H(+). Its function is as follows. Catalyzes the hydrolytic dehalogenation of small (S)-2-haloalkanoic acids to yield the corresponding (R)-2-hydroxyalkanoic acids. Acts on acids of short chain lengths, C(2) to C(4), with inversion of configuration at C-2. Active with 2-halogenated carboxylic acids and converts only the S-isomer (or L-isomer) of 2-chloropropionic acid with inversion of configuration to produce R-lactate (or D-isomer). The chain is (S)-2-haloacid dehalogenase from Pseudomonas sp. (strain YL).